The chain runs to 327 residues: Malate dehydrogenase (327 aa).

An NAD(+)-binding site is contributed by 11–17; that stretch reads GAAGQIS. 2 residues coordinate substrate: Arg-92 and Arg-98. Residues Asn-105, Gln-112, and 129–131 each bind NAD(+); that span reads VGN. Substrate is bound by residues Asn-131 and Arg-162. The active-site Proton acceptor is the His-187.

The protein belongs to the LDH/MDH superfamily. MDH type 2 family.

It carries out the reaction (S)-malate + NAD(+) = oxaloacetate + NADH + H(+). Its function is as follows. Catalyzes the reversible oxidation of malate to oxaloacetate. This is Malate dehydrogenase from Saccharophagus degradans (strain 2-40 / ATCC 43961 / DSM 17024).